Consider the following 525-residue polypeptide: GMP synthase [glutamine-hydrolyzing] (525 aa).

Positions 9–207 constitute a Glutamine amidotransferase type-1 domain; that stretch reads RILILDFGSQ…VRDICECEAL (199 aa). The active-site Nucleophile is the cysteine 86. Active-site residues include histidine 181 and glutamate 183. Positions 208–400 constitute a GMPS ATP-PPase domain; it reads WTPAKIIDDA…LGLPYDMLYR (193 aa). 235–241 lines the ATP pocket; it reads SGGVDSS.

Homodimer.

The catalysed reaction is XMP + L-glutamine + ATP + H2O = GMP + L-glutamate + AMP + diphosphate + 2 H(+). It functions in the pathway purine metabolism; GMP biosynthesis; GMP from XMP (L-Gln route): step 1/1. In terms of biological role, catalyzes the synthesis of GMP from XMP. In Cronobacter sakazakii (strain ATCC BAA-894) (Enterobacter sakazakii), this protein is GMP synthase [glutamine-hydrolyzing].